Here is a 426-residue protein sequence, read N- to C-terminus: Histidine--tRNA ligase (426 aa).

Belongs to the class-II aminoacyl-tRNA synthetase family. As to quaternary structure, homodimer.

Its subcellular location is the cytoplasm. The enzyme catalyses tRNA(His) + L-histidine + ATP = L-histidyl-tRNA(His) + AMP + diphosphate + H(+). In Lactiplantibacillus plantarum (strain ATCC BAA-793 / NCIMB 8826 / WCFS1) (Lactobacillus plantarum), this protein is Histidine--tRNA ligase.